The following is a 304-amino-acid chain: Pseudouridine-5'-phosphate glycosidase (304 aa).

E25 (proton donor) is an active-site residue. Residues K86 and V106 each contribute to the substrate site. Position 138 (D138) interacts with Mn(2+). 140-142 contributes to the substrate binding site; sequence SAD. K159 (nucleophile) is an active-site residue.

The protein belongs to the pseudouridine-5'-phosphate glycosidase family. In terms of assembly, homotrimer. Mn(2+) serves as cofactor.

It catalyses the reaction D-ribose 5-phosphate + uracil = psi-UMP + H2O. Its function is as follows. Catalyzes the reversible cleavage of pseudouridine 5'-phosphate (PsiMP) to ribose 5-phosphate and uracil. Functions biologically in the cleavage direction, as part of a pseudouridine degradation pathway. In Lysinibacillus sphaericus (strain C3-41), this protein is Pseudouridine-5'-phosphate glycosidase.